The primary structure comprises 241 residues: Phosphoribosylaminoimidazole-succinocarboxamide synthase (241 aa).

This sequence belongs to the SAICAR synthetase family.

The enzyme catalyses 5-amino-1-(5-phospho-D-ribosyl)imidazole-4-carboxylate + L-aspartate + ATP = (2S)-2-[5-amino-1-(5-phospho-beta-D-ribosyl)imidazole-4-carboxamido]succinate + ADP + phosphate + 2 H(+). Its pathway is purine metabolism; IMP biosynthesis via de novo pathway; 5-amino-1-(5-phospho-D-ribosyl)imidazole-4-carboxamide from 5-amino-1-(5-phospho-D-ribosyl)imidazole-4-carboxylate: step 1/2. The chain is Phosphoribosylaminoimidazole-succinocarboxamide synthase from Caldivirga maquilingensis (strain ATCC 700844 / DSM 13496 / JCM 10307 / IC-167).